Reading from the N-terminus, the 283-residue chain is GDP-polyphosphate phosphotransferase (283 aa).

It belongs to the polyphosphate kinase 2 (PPK2) family. Class I subfamily.

The catalysed reaction is [phosphate](n) + GTP = [phosphate](n+1) + GDP. Functionally, uses inorganic polyphosphate (polyP) as a donor to convert GDP to GTP. This is GDP-polyphosphate phosphotransferase from Mycolicibacterium smegmatis (strain ATCC 700084 / mc(2)155) (Mycobacterium smegmatis).